Here is a 342-residue protein sequence, read N- to C-terminus: HTH-type transcriptional regulator GbpR (342 aa).

The 58-residue stretch at 16–73 folds into the HTH lysR-type domain; the sequence is LKLRHLQLFVALDEHRNLHRAAASLTMSQPAASKLLGDLEESLGVTLFERHGRGVEPN. Residues 33 to 52 constitute a DNA-binding region (H-T-H motif); that stretch reads LHRAAASLTMSQPAASKLLG.

Belongs to the LysR transcriptional regulatory family.

Its function is as follows. Does not seem to be required for sbpA expression. This chain is HTH-type transcriptional regulator GbpR (gbpR), found in Azospirillum brasilense.